Reading from the N-terminus, the 553-residue chain is Probable glucomannan 4-beta-mannosyltransferase 1 (553 aa).

The helical transmembrane segment at 64 to 84 (LLPVFKGLVVMCLVLSIIVFF) threads the bilayer. Asp163 is a catalytic residue. The substrate site is built by Asp222 and Asp224. Asp316 is a catalytic residue. Helical transmembrane passes span 395 to 415 (VAVH…SVFF), 431 to 451 (LISI…IFWV), 510 to 530 (EVMV…YGHT), and 531 to 551 (WLHF…FGFV).

The protein belongs to the glycosyltransferase 2 family. Plant cellulose synthase-like A subfamily.

The protein resides in the golgi apparatus membrane. The enzyme catalyses GDP-mannose + (glucomannan)n = GDP + (glucomannan)n+1.. Its function is as follows. Probable mannan synthase which consists of a 4-beta-mannosyltransferase activity on mannan using GDP-mannose. The beta-1,4-mannan product is the backbone for galactomannan synthesis by galactomannan galactosyltransferase. Galactomannan is a noncellulosic polysaccharides of plant cell wall. This chain is Probable glucomannan 4-beta-mannosyltransferase 1, found in Arabidopsis thaliana (Mouse-ear cress).